The primary structure comprises 30 residues: Trypsin inhibitor 2 (30 aa).

Intrachain disulfides connect cysteine 2/cysteine 19, cysteine 9/cysteine 21, and cysteine 15/cysteine 27.

This sequence belongs to the protease inhibitor I7 (squash-type serine protease inhibitor) family.

The protein localises to the secreted. Its function is as follows. Inhibits trypsin. The polypeptide is Trypsin inhibitor 2 (Ecballium elaterium (Squirting cucumber)).